Consider the following 346-residue polypeptide: 3-isopropylmalate dehydrogenase (346 aa).

An NAD(+)-binding site is contributed by G76–E87. R94, R104, R132, and D217 together coordinate substrate. 3 residues coordinate Mg(2+): D217, D241, and D245. Position 275 to 287 (G275 to N287) interacts with NAD(+).

Belongs to the isocitrate and isopropylmalate dehydrogenases family. LeuB type 1 subfamily. Homodimer. The cofactor is Mg(2+). Requires Mn(2+) as cofactor.

Its subcellular location is the cytoplasm. It catalyses the reaction (2R,3S)-3-isopropylmalate + NAD(+) = 4-methyl-2-oxopentanoate + CO2 + NADH. It participates in amino-acid biosynthesis; L-leucine biosynthesis; L-leucine from 3-methyl-2-oxobutanoate: step 3/4. Catalyzes the oxidation of 3-carboxy-2-hydroxy-4-methylpentanoate (3-isopropylmalate) to 3-carboxy-4-methyl-2-oxopentanoate. The product decarboxylates to 4-methyl-2 oxopentanoate. The protein is 3-isopropylmalate dehydrogenase of Staphylococcus haemolyticus (strain JCSC1435).